A 474-amino-acid chain; its full sequence is Dihydrolipoyl dehydrogenase (474 aa).

FAD-binding positions include 34–51 (EGNPYDDPKGEARLGGTC), Lys60, and Gly124. The cysteines at positions 51 and 56 are disulfide-linked. NAD(+) contacts are provided by residues 189-193 (GAGVI), Glu212, Val246, and 278-281 (SVGR). FAD is bound by residues Asp321 and Ala329. Residue His453 is the Proton acceptor of the active site.

This sequence belongs to the class-I pyridine nucleotide-disulfide oxidoreductase family. It depends on FAD as a cofactor.

The protein resides in the cytoplasm. It carries out the reaction N(6)-[(R)-dihydrolipoyl]-L-lysyl-[protein] + NAD(+) = N(6)-[(R)-lipoyl]-L-lysyl-[protein] + NADH + H(+). The branched-chain alpha-keto dehydrogenase complex catalyzes the overall conversion of alpha-keto acids to acyl-CoA and CO(2). It contains multiple copies of 3 enzymatic components: branched-chain alpha-keto acid decarboxylase (E1), lipoamide acyltransferase (E2) and lipoamide dehydrogenase (E3). This chain is Dihydrolipoyl dehydrogenase (odhL), found in Cupriavidus necator (strain ATCC 17699 / DSM 428 / KCTC 22496 / NCIMB 10442 / H16 / Stanier 337) (Ralstonia eutropha).